Reading from the N-terminus, the 410-residue chain is Mating-type locus allele B4 protein (410 aa).

A variable domain between B alleles region spans residues 1 to 110 (MSSDPKISIT…ANASSPVVGC (110 aa)). The homeobox; TALE-type DNA-binding region spans 107 to 184 (VVGCRELSED…NARRRSGWSH (78 aa)). Residues 111–410 (RELSEDLPAY…PFLCLSVAFV (300 aa)) form a highly conserved between B alleles region. 3 disordered regions span residues 202–241 (RAKL…TPAD), 278–335 (TPKP…TPEL), and 375–394 (RGNR…QPDE). Residues 206–222 (SSSNQSTPPSPTSEYPS) show a composition bias toward low complexity. The short motif at 276–308 (KKTPKPGMPRPVTTVAKRQPARKTKPAAKPKSR) is the Nuclear localization signal element. The span at 294–307 (QPARKTKPAAKPKS) shows a compositional bias: basic residues. Polar residues predominate over residues 312 to 335 (PRASTTPSIDSTLDSSKLESTPEL). A not essential for B4 function region spans residues 333–410 (PELSMCSTAD…PFLCLSVAFV (78 aa)). Positions 375–388 (RGNRKVKALPKRAG) are enriched in basic residues.

The protein belongs to the TALE/M-ATYP homeobox family.

The protein resides in the nucleus. The B locus has at least 25 alleles, and any combination of two different B alleles yields a multimeric regulatory protein, that activates genes responsible for the pathogenicity and for the sexual development of the fungus within the corn plant. This chain is Mating-type locus allele B4 protein, found in Mycosarcoma maydis (Corn smut fungus).